A 434-amino-acid chain; its full sequence is Trigger factor (434 aa).

Residues 161 to 246 (EDRATIDFSG…LKKVEERELP (86 aa)) enclose the PPIase FKBP-type domain.

Belongs to the FKBP-type PPIase family. Tig subfamily.

Its subcellular location is the cytoplasm. The catalysed reaction is [protein]-peptidylproline (omega=180) = [protein]-peptidylproline (omega=0). In terms of biological role, involved in protein export. Acts as a chaperone by maintaining the newly synthesized protein in an open conformation. Functions as a peptidyl-prolyl cis-trans isomerase. The chain is Trigger factor from Erwinia tasmaniensis (strain DSM 17950 / CFBP 7177 / CIP 109463 / NCPPB 4357 / Et1/99).